Here is a 365-residue protein sequence, read N- to C-terminus: MKKYNKSFLIDVNCETLKVRQAFPFTALIGQTNMKLALILNVIDPKIGGVMSMGDRGTGKSTIVRSLVDLLPNIQVVSEDPFNSDPIDYDLMSQEVKEAKKSGEKIYTTSIKTPMVDLPLGATEDRVCGTIDIEKALIDGTKAFEPGLLAKANRGILYVDEVNLLDDHLVDILLDSAAGGWNTVEREGISIVHPARFILIGSGNPEEGELRPQLLDRFGMHVRIKTIKDPLSRVKIVERRSNFDKSAESFLKNYEYLQDFLKNRIVNAQGSLKDIKIDYQYKVNIAELCSNLNIDGLRGDIVTNRAVKAFVALNSRKTVLDKDVFTIMSLCLTHRLKKNPLESIDSSQNIVTIFKDIFGYSDLTA.

An ATP-binding site is contributed by 54-61; the sequence is GDRGTGKS.

The protein belongs to the Mg-chelatase subunits D/I family.

The protein resides in the plastid. It is found in the chloroplast. The enzyme catalyses protoporphyrin IX + Mg(2+) + ATP + H2O = Mg-protoporphyrin IX + ADP + phosphate + 3 H(+). It functions in the pathway porphyrin-containing compound metabolism; chlorophyll biosynthesis. Its function is as follows. Involved in chlorophyll biosynthesis; introduces a magnesium ion into protoporphyrin IX to yield Mg-protoporphyrin IX. The protein is Magnesium-chelatase subunit ChlI (chlI) of Bigelowiella natans (Pedinomonas minutissima).